The primary structure comprises 274 residues: NH(3)-dependent NAD(+) synthetase (274 aa).

Position 46-53 (46-53 (GISGGQDS)) interacts with ATP. Asp-52 contributes to the Mg(2+) binding site. Position 140 (Arg-140) interacts with deamido-NAD(+). ATP is bound at residue Thr-160. Mg(2+) is bound at residue Glu-165. Deamido-NAD(+) is bound by residues Lys-173 and Asp-180. ATP-binding residues include Lys-189 and Thr-211. Residue 260–261 (HK) participates in deamido-NAD(+) binding.

The protein belongs to the NAD synthetase family. As to quaternary structure, homodimer.

It catalyses the reaction deamido-NAD(+) + NH4(+) + ATP = AMP + diphosphate + NAD(+) + H(+). It functions in the pathway cofactor biosynthesis; NAD(+) biosynthesis; NAD(+) from deamido-NAD(+) (ammonia route): step 1/1. In terms of biological role, catalyzes the ATP-dependent amidation of deamido-NAD to form NAD. Uses ammonia as a nitrogen source. In Lactococcus lactis subsp. lactis (strain IL1403) (Streptococcus lactis), this protein is NH(3)-dependent NAD(+) synthetase.